We begin with the raw amino-acid sequence, 119 residues long: uncharacterized protein (119 aa).

Residues 67 to 119 (LGLKEVQKKSNEGLNEVQGVADINKQKRPANSQDSSSVEGDIQNFLEKVTGKN) are disordered. Residues 95-104 (PANSQDSSSV) are compositionally biased toward polar residues.

This is an uncharacterized protein from Anabaena variabilis.